Reading from the N-terminus, the 369-residue chain is Outer membrane porin F (369 aa).

A signal peptide spans 1–21; that stretch reads MKRNILAVVIPALLVAGTANA. The beta stranded transmembrane segment at 22 to 27 threads the bilayer; that stretch reads AEIFNK. Position 28 (Asp-28) is a topological domain, periplasmic. Residues 29–44 traverse the membrane as a beta stranded segment; sequence GNKLDLYGKVDVRHQF. Topologically, residues 45–55 are extracellular; it reads ADKRSSEDGDD. A beta stranded transmembrane segment spans residues 56–68; that stretch reads SYARIGIKGETQI. The Periplasmic segment spans residues 69-70; it reads SD. The beta stranded transmembrane segment at 71-83 threads the bilayer; the sequence is QLTGFGRWEYNVK. The Extracellular portion of the chain corresponds to 84–97; that stretch reads AKGTEAAVAESSTR. The beta stranded transmembrane segment at 98–106 threads the bilayer; that stretch reads LAFAGLKFA. At 107-108 the chain is on the periplasmic side; sequence NY. Residues 109 to 115 form a beta stranded membrane-spanning segment; sequence GSLDYGR. Residues 116 to 150 lie on the Extracellular side of the membrane; sequence NYGVNYDVNAWTDVLPIFGGDAMAQTDNFMTGRST. The beta stranded transmembrane segment at 151–157 threads the bilayer; sequence GLLTYRN. Residues 158 to 165 are Periplasmic-facing; it reads TDFFGLVD. A beta stranded membrane pass occupies residues 166 to 177; that stretch reads GLNFALQYQGQN. The Extracellular portion of the chain corresponds to 178–193; that stretch reads SDRTKNKGRDTERSNG. The chain crosses the membrane as a beta stranded span at residues 194 to 204; it reads DGYGLSSTYDV. Residues 205–206 are Periplasmic-facing; the sequence is GY. Residues 207 to 219 traverse the membrane as a beta stranded segment; it reads GITVGGSYANSAR. Residues 220 to 234 lie on the Extracellular side of the membrane; that stretch reads TADQKEKVSDAYGKR. A beta stranded membrane pass occupies residues 235–246; sequence AEAWNIGAKYDA. A topological domain (periplasmic) is located at residue Asn-247. The beta stranded transmembrane segment at 248 to 259 threads the bilayer; the sequence is NVYLAAMYGETR. Over 260–278 the chain is Extracellular; the sequence is NMTRYTRTIADTDATLIAN. Residues 279–291 traverse the membrane as a beta stranded segment; sequence KTQNIELTAQYLF. The Periplasmic segment spans residues 292–294; the sequence is SDL. A beta stranded membrane pass occupies residues 295-308; it reads GLKPSLAYVQSKGK. At 309 to 320 the chain is on the extracellular side; the sequence is DLTEGKGFNGDL. Residues 321 to 332 traverse the membrane as a beta stranded segment; the sequence is VKYVSVGTYYYF. The Periplasmic segment spans residues 333 to 334; sequence NK. Residues 335–344 traverse the membrane as a beta stranded segment; sequence NLSTYVDYKI. Over 345 to 359 the chain is Extracellular; the sequence is NLLKKDNELGVNARN. Residues 360-369 traverse the membrane as a beta stranded segment; it reads VFGVGLTYQF.

The protein belongs to the Gram-negative porin family. Homotrimer.

It is found in the cell outer membrane. Functionally, forms pores that allow passive diffusion of small molecules across the outer membrane. The protein is Outer membrane porin F (ompF) of Xenorhabdus nematophila (strain ATCC 19061 / DSM 3370 / CCUG 14189 / LMG 1036 / NCIMB 9965 / AN6).